The primary structure comprises 179 residues: MKIMARKNQKAPWEEEEEIIWVSKTEMKNDMEDLQKLGEELVGLKPSVLAKFPLSDDLREAINDAQRFKNEAKRRQLQFIGKLMRNEDPEPIQLALDKIRNKHSQATAALHKLETLRDRMIEEGDAVIEEVMVKYPDADRQRFRQLARQAKKEKASNKPPKAFREIFQILKDLYLNEDL.

It belongs to the DarP family.

The protein resides in the cytoplasm. In terms of biological role, member of a network of 50S ribosomal subunit biogenesis factors which assembles along the 30S-50S interface, preventing incorrect 23S rRNA structures from forming. Promotes peptidyl transferase center (PTC) maturation. This is Dual-action ribosomal maturation protein DarP from Aliivibrio fischeri (strain ATCC 700601 / ES114) (Vibrio fischeri).